A 234-amino-acid polypeptide reads, in one-letter code: Enolase-phosphatase E1 (234 aa).

Mg(2+) is bound by residues Asp-13 and Glu-15. Residues 127–128 and Lys-164 contribute to the substrate site; that span reads SS. Asp-191 lines the Mg(2+) pocket.

It belongs to the HAD-like hydrolase superfamily. MasA/MtnC family. As to quaternary structure, monomer. Mg(2+) serves as cofactor.

It localises to the cytoplasm. The protein localises to the nucleus. It catalyses the reaction 5-methylsulfanyl-2,3-dioxopentyl phosphate + H2O = 1,2-dihydroxy-5-(methylsulfanyl)pent-1-en-3-one + phosphate. It functions in the pathway amino-acid biosynthesis; L-methionine biosynthesis via salvage pathway; L-methionine from S-methyl-5-thio-alpha-D-ribose 1-phosphate: step 3/6. Its pathway is amino-acid biosynthesis; L-methionine biosynthesis via salvage pathway; L-methionine from S-methyl-5-thio-alpha-D-ribose 1-phosphate: step 4/6. Bifunctional enzyme that catalyzes the enolization of 2,3-diketo-5-methylthiopentyl-1-phosphate (DK-MTP-1-P) into the intermediate 2-hydroxy-3-keto-5-methylthiopentenyl-1-phosphate (HK-MTPenyl-1-P), which is then dephosphorylated to form the acireductone 1,2-dihydroxy-3-keto-5-methylthiopentene (DHK-MTPene). This is Enolase-phosphatase E1 from Podospora anserina (strain S / ATCC MYA-4624 / DSM 980 / FGSC 10383) (Pleurage anserina).